Consider the following 329-residue polypeptide: T-cell acute lymphocytic leukemia protein 1 homolog (329 aa).

Disordered stretches follow at residues 1–28, 40–78, and 91–125; these read MTERPPSEAARSDPQLEGQDAAEARMAP, ETSRAAPAEPPVIELGARSGAGGGPASGGGAARDLKGRD, and TELCRPPGPAPAPAPASAPAELPGDGRMVQLSPPA. Residue Ser-12 is modified to Phosphoserine. Over residues 58–70 the composition is skewed to gly residues; sequence SGAGGGPASGGGA. Residues 96-106 show a composition bias toward pro residues; the sequence is PPGPAPAPAPA. Ser-122 is modified (phosphoserine; by MAPK). Phosphoserine is present on Ser-172. The bHLH domain occupies 187–239; sequence VRRIFTNSRERWRQQNVNGAFAELRKLIPTHPPDKKLSKNEILRLAMKYINFL. Residues 247-329 form a disordered region; that stretch reads EEEGTQRAKP…LPAADGAGPR (83 aa). A compositionally biased stretch (gly residues) spans 263 to 273; sequence GAGGGGAGGGI. Low complexity predominate over residues 317 to 329; the sequence is PALLPAADGAGPR.

In terms of assembly, efficient DNA binding requires dimerization with another bHLH protein. Forms heterodimers with TCF3. Binds to the LIM domain containing protein LMO2 and to DRG1. Can assemble in a complex with LDB1 and LMO2. Component of a TAL-1 complex composed at least of CBFA2T3, LDB1, TAL1 and TCF3. Interacts with SBNO2; this interaction inhibits TAL1 occupancy of the DCSTAMP promoter, leading to the activation of the DCSTAMP promoter by the transcription factor MITF. Phosphorylated on serine residues. Phosphorylation of Ser-122 by MAPK is strongly stimulated by hypoxia. Post-translationally, ubiquitinated; subsequent to hypoxia-dependent phosphorylation of Ser-122, ubiquitination targets the protein for rapid degradation via the ubiquitin system. This process may be characteristic for microvascular endothelial cells, since it could not be observed in large vessel endothelial cells. In terms of tissue distribution, erythroid and myeloid cells.

It is found in the nucleus. In terms of biological role, implicated in the genesis of hemopoietic malignancies. It may play an important role in hemopoietic differentiation. Serves as a positive regulator of erythroid differentiation. This chain is T-cell acute lymphocytic leukemia protein 1 homolog (Tal1), found in Mus musculus (Mouse).